A 567-amino-acid chain; its full sequence is Potassium-transporting ATPase potassium-binding subunit (567 aa).

The next 12 helical transmembrane spans lie at 3–23, 64–84, 136–156, 179–199, 220–240, 254–274, 285–305, 330–350, 374–394, 420–440, 488–508, and 527–547; these read MIGWLQIILFCVIIVALTKPL, LTYTVAMLLFHVGGFLVIYGV, GLTHQNFLSAATGIALAMALI, LYVLLPICVVYTLFLVWQGIP, VGPVASQVAIKMLGTNGGGFF, LSNFVQMLSIFALGAALTNVF, WAILAVMGVLFVAGVAVTYWA, FGLVASSLFAVITTAASCGAV, IIVGGVGAGLYGMLLFVVLAI, AMLAILVLPLMYLGWTAVGVV, LASAMFVGRFFMIVPAMAIAG, and GGLFVGLVVGVILIIGGLTFF.

The protein belongs to the KdpA family. As to quaternary structure, the system is composed of three essential subunits: KdpA, KdpB and KdpC.

It is found in the cell inner membrane. Part of the high-affinity ATP-driven potassium transport (or Kdp) system, which catalyzes the hydrolysis of ATP coupled with the electrogenic transport of potassium into the cytoplasm. This subunit binds the periplasmic potassium ions and delivers the ions to the membrane domain of KdpB through an intramembrane tunnel. The sequence is that of Potassium-transporting ATPase potassium-binding subunit from Bradyrhizobium diazoefficiens (strain JCM 10833 / BCRC 13528 / IAM 13628 / NBRC 14792 / USDA 110).